Reading from the N-terminus, the 628-residue chain is Alpha-L-arabinofuranosidase A (628 aa).

Residues 1–25 (MVAFSALSGVSALSLLLCLVQHAHG) form the signal peptide. Asparagine 36, asparagine 51, asparagine 74, asparagine 152, asparagine 171, asparagine 260, asparagine 359, and asparagine 493 each carry an N-linked (GlcNAc...) asparagine glycan.

The protein belongs to the glycosyl hydrolase 51 family.

It localises to the secreted. It carries out the reaction Hydrolysis of terminal non-reducing alpha-L-arabinofuranoside residues in alpha-L-arabinosides.. The protein operates within glycan metabolism; L-arabinan degradation. In terms of biological role, alpha-L-arabinofuranosidase involved in the degradation of arabinoxylan, a major component of plant hemicellulose. Acts only on small linear 1,5-alpha-linked L-arabinofuranosyl oligosaccharides. In Aspergillus kawachii (strain NBRC 4308) (White koji mold), this protein is Alpha-L-arabinofuranosidase A (abfA).